The following is a 237-amino-acid chain: Proteasome subunit beta 2 (237 aa).

A compositionally biased stretch (polar residues) spans 1–14; that stretch reads MNNWSQGSTPQGSD. Residues 1–42 constitute a propeptide, removed in mature form; by autocatalysis; it reads MNNWSQGSTPQGSDPSPYAPELGSLPDGSQSDDHGDTVNKTG. Positions 1 to 45 are disordered; the sequence is MNNWSQGSTPQGSDPSPYAPELGSLPDGSQSDDHGDTVNKTGTTT. Thr-43 acts as the Nucleophile in catalysis.

Belongs to the peptidase T1B family. The 20S proteasome core is composed of 14 alpha and 14 beta subunits that assemble into four stacked heptameric rings, resulting in a barrel-shaped structure. The two inner rings, each composed of seven catalytic beta subunits, are sandwiched by two outer rings, each composed of seven alpha subunits. The catalytic chamber with the active sites is on the inside of the barrel. Has a gated structure, the ends of the cylinder being occluded by the N-termini of the alpha-subunits. Is capped at one or both ends by the proteasome regulatory ATPase, PAN.

It localises to the cytoplasm. The enzyme catalyses Cleavage of peptide bonds with very broad specificity.. Its activity is regulated as follows. The formation of the proteasomal ATPase PAN-20S proteasome complex, via the docking of the C-termini of PAN into the intersubunit pockets in the alpha-rings, triggers opening of the gate for substrate entry. Interconversion between the open-gate and close-gate conformations leads to a dynamic regulation of the 20S proteasome proteolysis activity. Functionally, component of the proteasome core, a large protease complex with broad specificity involved in protein degradation. In Haloterrigena turkmenica (strain ATCC 51198 / DSM 5511 / JCM 9101 / NCIMB 13204 / VKM B-1734 / 4k) (Halococcus turkmenicus), this protein is Proteasome subunit beta 2.